A 388-amino-acid chain; its full sequence is 4-hydroxy-3-methylbut-2-en-1-yl diphosphate synthase (flavodoxin) (388 aa).

[4Fe-4S] cluster contacts are provided by Cys-280, Cys-283, Cys-315, and Glu-322. The segment at 369–388 is disordered; that stretch reads MNSEGGPEATSSGSPVVTVS. The span at 377–388 shows a compositional bias: polar residues; that stretch reads ATSSGSPVVTVS.

The protein belongs to the IspG family. Requires [4Fe-4S] cluster as cofactor.

The catalysed reaction is (2E)-4-hydroxy-3-methylbut-2-enyl diphosphate + oxidized [flavodoxin] + H2O + 2 H(+) = 2-C-methyl-D-erythritol 2,4-cyclic diphosphate + reduced [flavodoxin]. The protein operates within isoprenoid biosynthesis; isopentenyl diphosphate biosynthesis via DXP pathway; isopentenyl diphosphate from 1-deoxy-D-xylulose 5-phosphate: step 5/6. Functionally, converts 2C-methyl-D-erythritol 2,4-cyclodiphosphate (ME-2,4cPP) into 1-hydroxy-2-methyl-2-(E)-butenyl 4-diphosphate. This is 4-hydroxy-3-methylbut-2-en-1-yl diphosphate synthase (flavodoxin) from Mycolicibacterium paratuberculosis (strain ATCC BAA-968 / K-10) (Mycobacterium paratuberculosis).